Consider the following 271-residue polypeptide: Small ribosomal subunit protein uS3 (271 aa).

The region spanning 40–108 (IRKFLKKRLY…TIIVNIVEVR (69 aa)) is the KH type-2 domain. The disordered stretch occupies residues 210–271 (PTRDGVNPRE…RPQRTENKGN (62 aa)). Basic and acidic residues predominate over residues 215 to 247 (VNPREESRKSDRRDNKRDNRRNDRRGNDRRGND).

Belongs to the universal ribosomal protein uS3 family. In terms of assembly, part of the 30S ribosomal subunit. Forms a tight complex with proteins S10 and S14.

Functionally, binds the lower part of the 30S subunit head. Binds mRNA in the 70S ribosome, positioning it for translation. This Clostridioides difficile (strain 630) (Peptoclostridium difficile) protein is Small ribosomal subunit protein uS3.